The primary structure comprises 180 residues: Large ribosomal subunit protein uL6 (180 aa).

Belongs to the universal ribosomal protein uL6 family. In terms of assembly, part of the 50S ribosomal subunit.

In terms of biological role, this protein binds to the 23S rRNA, and is important in its secondary structure. It is located near the subunit interface in the base of the L7/L12 stalk, and near the tRNA binding site of the peptidyltransferase center. The protein is Large ribosomal subunit protein uL6 of Salinispora tropica (strain ATCC BAA-916 / DSM 44818 / JCM 13857 / NBRC 105044 / CNB-440).